Consider the following 371-residue polypeptide: DNA primase large subunit PriL (371 aa).

The [4Fe-4S] cluster site is built by C230, C301, C310, and C317. Residues 337–371 (EREKEEGKEKGNEEKKEKREEHEKKNEKGNEIKEK) are disordered.

The protein belongs to the eukaryotic-type primase large subunit family. Heterodimer of a small subunit (PriS) and a large subunit (PriL). [4Fe-4S] cluster serves as cofactor.

Its function is as follows. Regulatory subunit of DNA primase, an RNA polymerase that catalyzes the synthesis of short RNA molecules used as primers for DNA polymerase during DNA replication. Stabilizes and modulates the activity of the small subunit, increasing the rate of DNA synthesis, and conferring RNA synthesis capability. The DNA polymerase activity may enable DNA primase to also catalyze primer extension after primer synthesis. May also play a role in DNA repair. The sequence is that of DNA primase large subunit PriL from Methanosarcina acetivorans (strain ATCC 35395 / DSM 2834 / JCM 12185 / C2A).